The primary structure comprises 338 residues: Photosystem II assembly lipoprotein Ycf48 (338 aa).

Positions 1 to 23 are cleaved as a signal peptide; the sequence is MKRLFSNVINLTLVLIVGVALSG. C24 carries N-palmitoyl cysteine lipidation. C24 carries the S-diacylglycerol cysteine lipid modification.

Belongs to the Ycf48 family. As to quaternary structure, part of early PSII assembly complexes which includes D1 (psbA) and PsbI; not found in mature PSII. Binds to the lumenal side of PSII complexes. Interacts with YidC.

It is found in the cellular thylakoid membrane. Functionally, a factor required for optimal assembly of photosystem II (PSII), acting in the early stages of PSII assembly. Also plays a role in replacement of photodamaged D1 (psbA). Assists YidC in synthesis of chlorophyll-binding proteins. The sequence is that of Photosystem II assembly lipoprotein Ycf48 from Prochlorococcus marinus (strain NATL2A).